The following is a 233-amino-acid chain: MSLLDPRQFLLPAFYLDPSTQAFLTQAVSNHKLGTASSFRISDILEPSPNNSTYSHDLDPSPQSVRSDLSTSPRASSPDRNSPMSKKSRKARTIFTDKQLQELENTFEKQKYLSVQDRMDLAHRMGLSDTQVKTWYQNRRTKWKRQATSGMDLLSEPGNLSAVQNLIRSSPYWANYITALPMGGQMGQMPMMGLPMPMIVPPAQHFQATSSSNSPSTHKSSESPQLDVSSNSD.

Polar residues predominate over residues 50–85 (NNSTYSHDLDPSPQSVRSDLSTSPRASSPDRNSPMS). Disordered stretches follow at residues 50–93 (NNST…KART) and 206–233 (FQAT…SNSD). Residues 88–147 (SRKARTIFTDKQLQELENTFEKQKYLSVQDRMDLAHRMGLSDTQVKTWYQNRRTKWKRQA) constitute a DNA-binding region (homeobox). Residues 224-233 (PQLDVSSNSD) are compositionally biased toward polar residues.

The protein localises to the nucleus. Its function is as follows. Cell-type specific anti-apoptotic transcription factor required for the sexually dimorphic survival of the male-specific CEM (cephalic male) sensory neurons during sex determination. In hermaphrodites, the homologous cells undergo programmed cell death due to transcriptional repression of ceh-30 by tra-1, the terminal regulator in the sex determination pathway. This is Homeobox protein ceh-30 from Caenorhabditis briggsae.